A 987-amino-acid chain; its full sequence is MVSKSDQLLIVVSILEGRHFPKRPKHMLIVEAKFDGEQLATDPVDHTDQPEFATELAWEIDRKALHQHRLQRTPIKLQCFALDPSTSARETIGYIVLDLRTAQETKQAPKWYQLLSNKYTKFKSEIQISIALETDTKAPVDSFKAKGAPPRDGKVPASLSGLDPKDIVAVLNEEGGYHQIGPAGYCTDFFIMSVTIAFATQLEQLIPCTMKLPERQPEFFFYYSLLGNDVTNEPFSDLINPNFEPERASVRIRSSIEILRVYLTLHSKLQIHLCCGDQSLGSTEIPLTGLLKKGSTEINHRPVTVEGAFTLDPPNRAKQKLAPIPVELAPTVGVSVALQREGMDVQSLIELKTQNEHEPHHSKKRVLTPIKENTHTGPQSPSESPVPPHNQSPPTKDDATESEVESLLYDKDTKLNPKAISSSVPALLAKPVTTSIASEAASGQKIAVPATSHHFCFSIDLRSIHDLEVGFPINCILRYSYPFFGSAAPIMTNPPVEVRKNMEVFLPQSYCAFDFATLPHQLQDTFLRIPLLVELWHKDKMSKDLLLGIARIQLSNILSSEKTRFLGSNGEQCWRQTFSESVPIVATQGSNNRIVDLSYTVTLEDYGLVKMREIFVSDSSQGLSAVQQKPSSVPPAPCPSEIQTEPRETLEYKAALELEMWKEMQEDIFENQLKQKELAHMQALAEEWKKRDRERESLVKKKVAEYNILEGKLQKTLIDLEKREQQLAIAESELQRERRELKSERERNLQELQDSIRRAKEDCVHQVELERLKMKQLEEDKHRLQQQLNDAENKYKTLEKEFHQFKDQQSSKPEIRLQSEINLLTLEKVELERKLESATKSKLHYKQQWGRALKELARLKQREQESQMARLKKQQEELEQMRLRYLAAEEKDTVKTERQELLDIRNELNRLRQQEQKQYPDSREIASGKMDGPHGSALEEGLDDYLTRLIEERDTLMRTGVYNHEDRIISELDRQIREVLAKNNASN.

The C2 1 domain occupies 1–112 (MVSKSDQLLI…QETKQAPKWY (112 aa)). A disordered region spans residues 352-408 (KTQNEHEPHHSKKRVLTPIKENTHTGPQSPSESPVPPHNQSPPTKDDATESEVESLL). The C2 2 domain maps to 438–567 (SEAASGQKIA…LSSEKTRFLG (130 aa)). Residues 670 to 919 (ENQLKQKELA…RLRQQEQKQY (250 aa)) are a coiled coil. Basic and acidic residues predominate over residues 912–926 (RQQEQKQYPDSREIA). Positions 912-937 (RQQEQKQYPDSREIASGKMDGPHGSA) are disordered. Residue serine 936 is modified to Phosphoserine.

Belongs to the CEP120 family. Interacts with TACC2 and TACC3. Interacts with CCDC52.

It is found in the cytoplasm. Its subcellular location is the cytoskeleton. It localises to the microtubule organizing center. The protein localises to the centrosome. Its function is as follows. Plays a role in the microtubule-dependent coupling of the nucleus and the centrosome. Involved in the processes that regulate centrosome-mediated interkinetic nuclear migration (INM) of neural progenitors and for proper positioning of neurons during brain development. Also implicated in the migration and selfrenewal of neural progenitors. May play a role in centriole duplication during mitosis. Required for the recruitment of CEP295 to the proximal end of new-born centrioles at the centriolar microtubule wall during early S phase in a PLK4-dependent manner. The chain is Centrosomal protein of 120 kDa (CEP120) from Bos taurus (Bovine).